The chain runs to 147 residues: 3-hydroxyacyl-[acyl-carrier-protein] dehydratase FabZ (147 aa).

The active site involves H48.

Belongs to the thioester dehydratase family. FabZ subfamily.

Its subcellular location is the cytoplasm. It catalyses the reaction a (3R)-hydroxyacyl-[ACP] = a (2E)-enoyl-[ACP] + H2O. In terms of biological role, involved in unsaturated fatty acids biosynthesis. Catalyzes the dehydration of short chain beta-hydroxyacyl-ACPs and long chain saturated and unsaturated beta-hydroxyacyl-ACPs. This is 3-hydroxyacyl-[acyl-carrier-protein] dehydratase FabZ from Aliarcobacter butzleri (strain RM4018) (Arcobacter butzleri).